Reading from the N-terminus, the 120-residue chain is Autophagy-related protein 8C (120 aa).

A disordered region spans residues 1–20; it reads MARSSFKLEHPLERRQAEAN. The Phosphatidylethanolamine amidated glycine moiety is linked to residue Gly-117. Residues 118–120 constitute a propeptide, removed in mature form; the sequence is LFV.

This sequence belongs to the ATG8 family. In terms of assembly, interacts with ATG4. In terms of processing, the C-terminal 3 residues are removed by ATG4 to expose Gly-117 at the C-terminus. The C-terminal Gly is then amidated with phosphatidylethanolamine by an activating system similar to that for ubiquitin.

The protein localises to the cytoplasmic vesicle. It is found in the autophagosome membrane. The protein resides in the vacuole membrane. It localises to the cytoplasm. Its subcellular location is the cytoskeleton. Ubiquitin-like modifier involved in autophagosomes formation. May mediate the delivery of the autophagosomes to the vacuole via the microtubule cytoskeleton. This chain is Autophagy-related protein 8C (ATG8C), found in Oryza sativa subsp. indica (Rice).